The primary structure comprises 182 residues: MQTEHVILLNAQGVPTGTLEKYAAHTADTLLHLAFSSWLFNAKGQLLVTRRALSKKAWPGVWTNSVCGHPQLGESNEDAVIRRCRFELGVEITAPEPVYPDFRYRATDPNGIVENEVCPVFAARTTSALQINDDEVMDYQWCDLADVLHGIDATPWAFSPWMVMQATNREARKRLSAFTQLK.

Residues His-25 and His-32 each contribute to the Mn(2+) site. The Nudix hydrolase domain maps to 30 to 164 (LLHLAFSSWL…PWAFSPWMVM (135 aa)). The active site involves Cys-67. His-69 provides a ligand contact to Mn(2+). Glu-87 lines the Mg(2+) pocket. Mn(2+)-binding residues include Glu-114 and Glu-116. Glu-116 is an active-site residue.

This sequence belongs to the IPP isomerase type 1 family. Homodimer. Mg(2+) is required as a cofactor. It depends on Mn(2+) as a cofactor.

The protein resides in the cytoplasm. It catalyses the reaction isopentenyl diphosphate = dimethylallyl diphosphate. The protein operates within isoprenoid biosynthesis; dimethylallyl diphosphate biosynthesis; dimethylallyl diphosphate from isopentenyl diphosphate: step 1/1. Catalyzes the 1,3-allylic rearrangement of the homoallylic substrate isopentenyl (IPP) to its highly electrophilic allylic isomer, dimethylallyl diphosphate (DMAPP). This Escherichia coli O7:K1 (strain IAI39 / ExPEC) protein is Isopentenyl-diphosphate Delta-isomerase.